Reading from the N-terminus, the 393-residue chain is Probable pectinesterase 8 (393 aa).

An N-terminal signal peptide occupies residues 1–19 (MKIISLSISIGIAIIAVLA). N100, N113, N140, N156, and N163 each carry an N-linked (GlcNAc...) asparagine glycan. T165 contacts substrate. N-linked (GlcNAc...) asparagine glycosylation occurs at N182. Residue Q200 participates in substrate binding. D223 acts as the Proton donor in catalysis. D244 (nucleophile) is an active-site residue. N-linked (GlcNAc...) asparagine glycosylation is present at N295. R308 contacts substrate. Residues N350, N369, and N378 are each glycosylated (N-linked (GlcNAc...) asparagine).

It belongs to the pectinesterase family. Expressed in siliques.

It is found in the secreted. It localises to the cell wall. It catalyses the reaction [(1-&gt;4)-alpha-D-galacturonosyl methyl ester](n) + n H2O = [(1-&gt;4)-alpha-D-galacturonosyl](n) + n methanol + n H(+). The protein operates within glycan metabolism; pectin degradation; 2-dehydro-3-deoxy-D-gluconate from pectin: step 1/5. In terms of biological role, acts in the modification of cell walls via demethylesterification of cell wall pectin. The protein is Probable pectinesterase 8 (PME8) of Arabidopsis thaliana (Mouse-ear cress).